A 505-amino-acid polypeptide reads, in one-letter code: Glycerol kinase (505 aa).

An ADP-binding site is contributed by Thr14. ATP-binding residues include Thr14, Thr15, and Ser16. Thr14 serves as a coordination point for sn-glycerol 3-phosphate. ADP is bound at residue Arg18. Residues Arg84, Glu85, Tyr136, and Asp246 each contribute to the sn-glycerol 3-phosphate site. Glycerol is bound by residues Arg84, Glu85, Tyr136, Asp246, and Gln247. The ADP site is built by Thr268 and Gly311. Thr268, Gly311, Gln315, and Gly412 together coordinate ATP. The ADP site is built by Gly412 and Asn416.

It belongs to the FGGY kinase family.

The enzyme catalyses glycerol + ATP = sn-glycerol 3-phosphate + ADP + H(+). It functions in the pathway polyol metabolism; glycerol degradation via glycerol kinase pathway; sn-glycerol 3-phosphate from glycerol: step 1/1. With respect to regulation, inhibited by fructose 1,6-bisphosphate (FBP). Its function is as follows. Key enzyme in the regulation of glycerol uptake and metabolism. Catalyzes the phosphorylation of glycerol to yield sn-glycerol 3-phosphate. The sequence is that of Glycerol kinase from Vibrio cholerae serotype O1 (strain ATCC 39315 / El Tor Inaba N16961).